The primary structure comprises 1404 residues: DNA-directed RNA polymerase subunit beta' (1404 aa).

Cys-70, Cys-72, Cys-85, and Cys-88 together coordinate Zn(2+). Positions 460, 462, and 464 each coordinate Mg(2+). The Zn(2+) site is built by Cys-814, Cys-888, Cys-895, and Cys-898.

This sequence belongs to the RNA polymerase beta' chain family. In terms of assembly, the RNAP catalytic core consists of 2 alpha, 1 beta, 1 beta' and 1 omega subunit. When a sigma factor is associated with the core the holoenzyme is formed, which can initiate transcription. It depends on Mg(2+) as a cofactor. Zn(2+) is required as a cofactor.

The catalysed reaction is RNA(n) + a ribonucleoside 5'-triphosphate = RNA(n+1) + diphosphate. DNA-dependent RNA polymerase catalyzes the transcription of DNA into RNA using the four ribonucleoside triphosphates as substrates. This is DNA-directed RNA polymerase subunit beta' from Shewanella piezotolerans (strain WP3 / JCM 13877).